The sequence spans 452 residues: Pup--protein ligase (452 aa).

Glutamate 9 contributes to the Mg(2+) binding site. Residue arginine 53 participates in ATP binding. Tyrosine 55 contacts Mg(2+). Catalysis depends on aspartate 57, which acts as the Proton acceptor. A Mg(2+)-binding site is contributed by glutamate 63. ATP is bound by residues threonine 66 and tryptophan 419.

Belongs to the Pup ligase/Pup deamidase family. Pup-conjugating enzyme subfamily.

It carries out the reaction ATP + [prokaryotic ubiquitin-like protein]-L-glutamate + [protein]-L-lysine = ADP + phosphate + N(6)-([prokaryotic ubiquitin-like protein]-gamma-L-glutamyl)-[protein]-L-lysine.. The protein operates within protein degradation; proteasomal Pup-dependent pathway. It functions in the pathway protein modification; protein pupylation. Functionally, catalyzes the covalent attachment of the prokaryotic ubiquitin-like protein modifier Pup to the proteasomal substrate proteins, thereby targeting them for proteasomal degradation. This tagging system is termed pupylation. The ligation reaction involves the side-chain carboxylate of the C-terminal glutamate of Pup and the side-chain amino group of a substrate lysine. The polypeptide is Pup--protein ligase (Streptosporangium roseum (strain ATCC 12428 / DSM 43021 / JCM 3005 / KCTC 9067 / NCIMB 10171 / NRRL 2505 / NI 9100)).